Consider the following 368-residue polypeptide: RNA polymerase sigma factor SigA (368 aa).

Residues 69-90 (LVNEKDSSDTDEKLNPSDLSAP) are disordered. Positions 71–83 (NEKDSSDTDEKLN) are enriched in basic and acidic residues. The sigma-70 factor domain-2 stretch occupies residues 135-205 (LAEANLRLVV…TRAIADQART (71 aa)). Positions 159-162 (DLIQ) match the Interaction with polymerase core subunit RpoC motif. The segment at 214-290 (ETINKLIRVQ…DQEAQSPSDH (77 aa)) is sigma-70 factor domain-3. Residues 303-356 (VLDTLTDREENVLRLRFGLDDGRTRTLEEVGKVFGVTRERIRQIEAKALRKLRH) form a sigma-70 factor domain-4 region. Positions 329–348 (LEEVGKVFGVTRERIRQIEA) form a DNA-binding region, H-T-H motif.

This sequence belongs to the sigma-70 factor family. RpoD/SigA subfamily. As to quaternary structure, interacts transiently with the RNA polymerase catalytic core.

The protein resides in the cytoplasm. Its function is as follows. Sigma factors are initiation factors that promote the attachment of RNA polymerase to specific initiation sites and are then released. This sigma factor is the primary sigma factor during exponential growth. In Staphylococcus aureus (strain N315), this protein is RNA polymerase sigma factor SigA.